Consider the following 425-residue polypeptide: Aspartic protease 2 (425 aa).

The signal sequence occupies residues Met1–Ala16. The Peptidase A1 domain maps to Tyr72–Ala421. Asp90 is an active-site residue. The cysteines at positions 103 and 145 are disulfide-linked. N-linked (GlcNAc...) asparagine glycans are attached at residues Asn163, Asn197, and Asn304. Residue Asp316 is part of the active site. Residues Cys351 and Cys382 are joined by a disulfide bond. 2 N-linked (GlcNAc...) asparagine glycosylation sites follow: Asn354 and Asn365.

The protein belongs to the peptidase A1 family. Cleaved into a mature form. As to expression, expressed in intestine, amphidal glands and excretory gland (at protein level).

Its subcellular location is the secreted. Inhibited by pepstatin A. Functionally, aspartic protease which cleaves several human serum proteins including hemoglobin, fibrinogen and albumin. Appears to cleave preferentially between P1 (Ala, Leu, Val, Phe and Gly) and P1' (Ala and Leu) residues. In Necator americanus (Human hookworm), this protein is Aspartic protease 2.